The chain runs to 547 residues: MTETLSKTTEPSVTTGPIPGSSKAYREVANPDGGPSLRVPFRRVHLSTGAHFDLYDTSGPYTDPDAVINLTAGLPPRPGVIRDRGTQLQRARAGEITAEMAFIADREGMPAELVRVEVALGRAVIPANHNHPEIEPMIIGKAFAVKVNANIGNSAVTSSIAEEIDKMVWATRWGADTIMDLSTGKNIHETREWILRNSPVPVGTVPIYQALEKVKGDPTKLTWEIYRDTVIEQCEQGVDYMTVHAGVLLRYVLLTAKRVTGIVSRGGSIMASWCLANHRESFLYTNFAELCDIFARYDVTFSLGDGLRPGSIADANDTAQFAELRTLGELSKIAKVHGAQVMIEGPGHIPMHKIVENVRLEEELCEEAPFYTLGPLATDIAPAYDHITSAIGAAVIAQAGTAMLCYVTPKEHLGLPDRKDVKDGVIAYKIAAHAADLAKGYPRAQERDDALSTARFEFRWNDQFALSLDPPTAREFHDETLPAEPAKTAHFCSMCGPKFCSMRITADIRVYAAKHGLDTEEAIEMGMTEKSAEFAEHGNRVYLPLTQ.

The span at M1 to T15 shows a compositional bias: polar residues. The interval M1–S36 is disordered. Residues N150, M179, Y208, H244, S264 to G266, D305 to R308, and E344 each bind substrate. A Zn(2+)-binding site is contributed by H348. Y371 lines the substrate pocket. H412 contacts Zn(2+). Residues C492, C495, and C500 each contribute to the [4Fe-4S] cluster site.

It belongs to the ThiC family. It depends on [4Fe-4S] cluster as a cofactor.

The catalysed reaction is 5-amino-1-(5-phospho-beta-D-ribosyl)imidazole + S-adenosyl-L-methionine = 4-amino-2-methyl-5-(phosphooxymethyl)pyrimidine + CO + 5'-deoxyadenosine + formate + L-methionine + 3 H(+). Its pathway is cofactor biosynthesis; thiamine diphosphate biosynthesis. In terms of biological role, catalyzes the synthesis of the hydroxymethylpyrimidine phosphate (HMP-P) moiety of thiamine from aminoimidazole ribotide (AIR) in a radical S-adenosyl-L-methionine (SAM)-dependent reaction. This is Phosphomethylpyrimidine synthase from Mycobacterium leprae (strain Br4923).